The following is a 118-amino-acid chain: Small ribosomal subunit protein uS13 (118 aa).

Residues 94–118 (SLPLRGQRTKTNARTRKGPRKPIKK) are disordered.

This sequence belongs to the universal ribosomal protein uS13 family. As to quaternary structure, part of the 30S ribosomal subunit. Forms a loose heterodimer with protein S19. Forms two bridges to the 50S subunit in the 70S ribosome.

Functionally, located at the top of the head of the 30S subunit, it contacts several helices of the 16S rRNA. In the 70S ribosome it contacts the 23S rRNA (bridge B1a) and protein L5 of the 50S subunit (bridge B1b), connecting the 2 subunits; these bridges are implicated in subunit movement. Contacts the tRNAs in the A and P-sites. The chain is Small ribosomal subunit protein uS13 from Shewanella amazonensis (strain ATCC BAA-1098 / SB2B).